The sequence spans 262 residues: NAD-dependent protein deacylase (262 aa).

The Deacetylase sirtuin-type domain maps to 1–262; the sequence is MSNLRRAAEA…AALSPPGVPT (262 aa). Position 22–42 (22–42) interacts with NAD(+); it reads GAGISADSGIPTFRDKLTGLW. The substrate site is built by Tyr-67 and Arg-70. 101–104 contributes to the NAD(+) binding site; sequence QNID. Catalysis depends on His-119, which acts as the Proton acceptor. 4 residues coordinate Zn(2+): Cys-127, Cys-130, Cys-155, and Cys-158. Residues 195–197, 221–223, and Ala-239 each bind NAD(+); these read GTS and NLE.

This sequence belongs to the sirtuin family. Class III subfamily. Zn(2+) is required as a cofactor.

Its subcellular location is the cytoplasm. The enzyme catalyses N(6)-acetyl-L-lysyl-[protein] + NAD(+) + H2O = 2''-O-acetyl-ADP-D-ribose + nicotinamide + L-lysyl-[protein]. The catalysed reaction is N(6)-succinyl-L-lysyl-[protein] + NAD(+) + H2O = 2''-O-succinyl-ADP-D-ribose + nicotinamide + L-lysyl-[protein]. In terms of biological role, NAD-dependent lysine deacetylase and desuccinylase that specifically removes acetyl and succinyl groups on target proteins. Modulates the activities of several proteins which are inactive in their acylated form. This Pseudomonas putida (strain ATCC 47054 / DSM 6125 / CFBP 8728 / NCIMB 11950 / KT2440) protein is NAD-dependent protein deacylase.